The sequence spans 94 residues: Pyrimidine/purine nucleoside phosphorylase (94 aa).

This sequence belongs to the nucleoside phosphorylase PpnP family.

It carries out the reaction a purine D-ribonucleoside + phosphate = a purine nucleobase + alpha-D-ribose 1-phosphate. The catalysed reaction is adenosine + phosphate = alpha-D-ribose 1-phosphate + adenine. The enzyme catalyses cytidine + phosphate = cytosine + alpha-D-ribose 1-phosphate. It catalyses the reaction guanosine + phosphate = alpha-D-ribose 1-phosphate + guanine. It carries out the reaction inosine + phosphate = alpha-D-ribose 1-phosphate + hypoxanthine. The catalysed reaction is thymidine + phosphate = 2-deoxy-alpha-D-ribose 1-phosphate + thymine. The enzyme catalyses uridine + phosphate = alpha-D-ribose 1-phosphate + uracil. It catalyses the reaction xanthosine + phosphate = alpha-D-ribose 1-phosphate + xanthine. In terms of biological role, catalyzes the phosphorolysis of diverse nucleosides, yielding D-ribose 1-phosphate and the respective free bases. Can use uridine, adenosine, guanosine, cytidine, thymidine, inosine and xanthosine as substrates. Also catalyzes the reverse reactions. This chain is Pyrimidine/purine nucleoside phosphorylase, found in Citrobacter koseri (strain ATCC BAA-895 / CDC 4225-83 / SGSC4696).